The sequence spans 142 residues: MAPKKKVVGLIKLQIKAGEANPAPPVGPALGQHGVNIMEFCKAYNAATESQRGNVIPVEISVYEDRSFTFALKTPPAAKLLLKAAGVPKGSGEPHKTKVAKVSWDQVREIAETKKEDLNANDIDAAAKIIAGTARSMGITVE.

The protein belongs to the universal ribosomal protein uL11 family. Part of the ribosomal stalk of the 50S ribosomal subunit. Interacts with L10 and the large rRNA to form the base of the stalk. L10 forms an elongated spine to which L12 dimers bind in a sequential fashion forming a multimeric L10(L12)X complex. One or more lysine residues are methylated.

In terms of biological role, forms part of the ribosomal stalk which helps the ribosome interact with GTP-bound translation factors. This is Large ribosomal subunit protein uL11 from Mycobacteroides abscessus (strain ATCC 19977 / DSM 44196 / CCUG 20993 / CIP 104536 / JCM 13569 / NCTC 13031 / TMC 1543 / L948) (Mycobacterium abscessus).